The chain runs to 462 residues: Fumarate hydratase class II (462 aa).

Residues Ser-98 to Thr-100, Arg-126, His-129 to Asp-132, Ser-139 to Asn-141, and Thr-187 contribute to the substrate site. The disordered stretch occupies residues Gly-120 to Asn-141. His-188 acts as the Proton donor/acceptor in catalysis. The active site involves Ser-318. Residues Ser-319 and Lys-324–Asn-326 contribute to the substrate site.

It belongs to the class-II fumarase/aspartase family. Fumarase subfamily. Homotetramer.

Its subcellular location is the cytoplasm. The enzyme catalyses (S)-malate = fumarate + H2O. Its pathway is carbohydrate metabolism; tricarboxylic acid cycle; (S)-malate from fumarate: step 1/1. Its function is as follows. Involved in the TCA cycle. Catalyzes the stereospecific interconversion of fumarate to L-malate. The polypeptide is Fumarate hydratase class II (Nitrosomonas europaea (strain ATCC 19718 / CIP 103999 / KCTC 2705 / NBRC 14298)).